The following is a 309-amino-acid chain: NADH-cytochrome b5 reductase 2 (309 aa).

A helical membrane pass occupies residues 3 to 23; sequence ILTAPVLIGVSIVVITVLYLF. One can recognise an FAD-binding FR-type domain in the interval 48-160; it reads SVKYPLPLIE…RGPNGLLVYN (113 aa). FAD contacts are provided by residues 140-170 and 179-214; these read DNMK…IRPD and KFKH…VCSL.

It belongs to the flavoprotein pyridine nucleotide cytochrome reductase family. Requires FAD as cofactor.

The protein resides in the membrane. It carries out the reaction 2 Fe(III)-[cytochrome b5] + NADH = 2 Fe(II)-[cytochrome b5] + NAD(+) + H(+). NADH-cytochrome b5 reductases are involved in desaturation and elongation of fatty acids, cholesterol biosynthesis and drug metabolism. The sequence is that of NADH-cytochrome b5 reductase 2 (cyb5r2) from Danio rerio (Zebrafish).